A 578-amino-acid polypeptide reads, in one-letter code: MPRGLELLIAQTILQGFDAQYGRFLEVTSGAQQRFEQADWHAVQQAMKNRIHLYDHHVGLVVEQLRCITNGQSTDAAFLLRVKEHYTRLLPDYPRFEIAESFFNSVYCRLFDHRSLTPERLFIFSSQPERRFRTIPRPLAKDFHPDHGWESLLMRVISDLPLRLRWQNKSRDIHYIVRHLTETLGTDNLAESHLQVANELFYRNKAAWLVGKLITPSGTLPFLLPIHQTDDGELFIDTCLTTTAEASIVFGFARSYFMVYAPLPAALVEWLREILPGKTTAELYMAIGCQKHAKTESYREYLVYLQGCNEQFIEAPGIRGMVMLVFTLPGFDRVFKVIKDKFAPQKEMSAAHVRACYQLVKEHDRVGRMADTQEFENFVLEKRHISPALMALLLQEAAEKITDLGEQIVIRHLYIERRMVPLNIWLEQVEGQQLRDAIEEYGNAIRQLAAANIFPGDMLFKNFGVTRHGRVVFYDYDEICYMTEVNFRDIPPPRYPEDELASEPWYSVSPGDVFPEEFRHWLCADPRIGPLFEEMHADLFRADYWRALQNRIRDGHVEDVYAYRRRQRFSVRYGEMLF.

ATP contacts are provided by residues 315-321 (APGIRGM) and Lys-336. Asp-371 is an active-site residue.

Belongs to the AceK family.

It localises to the cytoplasm. It carries out the reaction L-seryl-[isocitrate dehydrogenase] + ATP = O-phospho-L-seryl-[isocitrate dehydrogenase] + ADP + H(+). Its function is as follows. Bifunctional enzyme which can phosphorylate or dephosphorylate isocitrate dehydrogenase (IDH) on a specific serine residue. This is a regulatory mechanism which enables bacteria to bypass the Krebs cycle via the glyoxylate shunt in response to the source of carbon. When bacteria are grown on glucose, IDH is fully active and unphosphorylated, but when grown on acetate or ethanol, the activity of IDH declines drastically concomitant with its phosphorylation. The protein is Isocitrate dehydrogenase kinase/phosphatase of Escherichia coli O17:K52:H18 (strain UMN026 / ExPEC).